The sequence spans 440 residues: UDP-N-acetylmuramoylalanine--D-glutamate ligase (440 aa).

113–119 (GTNGKST) contributes to the ATP binding site.

This sequence belongs to the MurCDEF family.

Its subcellular location is the cytoplasm. The enzyme catalyses UDP-N-acetyl-alpha-D-muramoyl-L-alanine + D-glutamate + ATP = UDP-N-acetyl-alpha-D-muramoyl-L-alanyl-D-glutamate + ADP + phosphate + H(+). Its pathway is cell wall biogenesis; peptidoglycan biosynthesis. Its function is as follows. Cell wall formation. Catalyzes the addition of glutamate to the nucleotide precursor UDP-N-acetylmuramoyl-L-alanine (UMA). The sequence is that of UDP-N-acetylmuramoylalanine--D-glutamate ligase from Buchnera aphidicola subsp. Acyrthosiphon pisum (strain Tuc7).